The sequence spans 146 residues: Lysozyme C-2 (146 aa).

A signal peptide spans 1–18 (MKTLLVLALLLLSVSVQA). The C-type lysozyme domain occupies 19–146 (KVYDRCEFAR…VSQYIRGCKL (128 aa)). 4 disulfides stabilise this stretch: C24/C144, C48/C132, C81/C97, and C93/C111. Catalysis depends on residues E53 and D69.

This sequence belongs to the glycosyl hydrolase 22 family. As to quaternary structure, monomer.

It is found in the secreted. The enzyme catalyses Hydrolysis of (1-&gt;4)-beta-linkages between N-acetylmuramic acid and N-acetyl-D-glucosamine residues in a peptidoglycan and between N-acetyl-D-glucosamine residues in chitodextrins.. Functionally, lysozymes have primarily a bacteriolytic function; those in tissues and body fluids are associated with the monocyte-macrophage system and enhance the activity of immunoagents. The sequence is that of Lysozyme C-2 from Sus scrofa (Pig).